The primary structure comprises 145 residues: MLVPTRVKHRKQHRGRMHGKATRGNTITFGEYGLVALEPAWITNRQIEAARIAMTRYIKRGGKVWIKIFPDKPITAKPAETRMGSGKGSPEYWVAVVKPGRVMFELAGVPEEIAKEALRLAMHKLPVKCKIVRREELEGGDANEN.

Basic residues predominate over residues 1–21; sequence MLVPTRVKHRKQHRGRMHGKA. Residues 1–22 form a disordered region; the sequence is MLVPTRVKHRKQHRGRMHGKAT.

It belongs to the universal ribosomal protein uL16 family. As to quaternary structure, part of the 50S ribosomal subunit.

In terms of biological role, binds 23S rRNA and is also seen to make contacts with the A and possibly P site tRNAs. The polypeptide is Large ribosomal subunit protein uL16 (Desulfitobacterium hafniense (strain Y51)).